A 645-amino-acid polypeptide reads, in one-letter code: Threonine--tRNA ligase (645 aa).

The region spanning 3–64 (DMINITFPDG…EQDGTITIVT (62 aa)) is the TGS domain. A catalytic region spans residues 247–544 (DHRKLGKELG…LLEEYKGAFP (298 aa)). Cys-340, His-391, and His-521 together coordinate Zn(2+).

The protein belongs to the class-II aminoacyl-tRNA synthetase family. Homodimer. It depends on Zn(2+) as a cofactor.

The protein resides in the cytoplasm. The catalysed reaction is tRNA(Thr) + L-threonine + ATP = L-threonyl-tRNA(Thr) + AMP + diphosphate + H(+). Functionally, catalyzes the attachment of threonine to tRNA(Thr) in a two-step reaction: L-threonine is first activated by ATP to form Thr-AMP and then transferred to the acceptor end of tRNA(Thr). Also edits incorrectly charged L-seryl-tRNA(Thr). In Halalkalibacterium halodurans (strain ATCC BAA-125 / DSM 18197 / FERM 7344 / JCM 9153 / C-125) (Bacillus halodurans), this protein is Threonine--tRNA ligase.